Here is a 126-residue protein sequence, read N- to C-terminus: Histone H2B type 1-K (126 aa).

The segment covering 1 to 12 has biased composition (low complexity); sequence MPEPAKSAPAPK. Positions 1-36 are disordered; sequence MPEPAKSAPAPKKGSKKAVTKAQKIDGKKRKRSRKE. Pro2 is subject to N-acetylproline. Residue Glu3 is modified to ADP-ribosyl glutamic acid. The residue at position 6 (Lys6) is an N6-(2-hydroxyisobutyryl)lysine; alternate. Lys6 carries the post-translational modification N6-(beta-hydroxybutyryl)lysine; alternate. Lys6 carries the post-translational modification N6-acetyllysine; alternate. Lys6 carries the post-translational modification N6-butyryllysine; alternate. Lys6 bears the N6-crotonyllysine; alternate mark. An N6-lactoyllysine; alternate modification is found at Lys6. Lys6 participates in a covalent cross-link: Glycyl lysine isopeptide (Lys-Gly) (interchain with G-Cter in SUMO2); alternate. Ser7 is subject to ADP-ribosylserine. Lys12 is subject to N6-(beta-hydroxybutyryl)lysine; alternate. N6-acetyllysine; alternate is present on residues Lys12 and Lys13. 2 positions are modified to N6-crotonyllysine; alternate: Lys12 and Lys13. N6-lactoyllysine; alternate is present on Lys12. At Lys13 the chain carries N6-(2-hydroxyisobutyryl)lysine; alternate. A Phosphoserine; by STK4/MST1 modification is found at Ser15. An N6-acetyllysine; alternate mark is found at Lys16, Lys17, Lys21, and Lys24. Residues Lys16, Lys17, Lys21, Lys24, and Lys35 each carry the N6-crotonyllysine; alternate modification. Residues Lys16, Lys17, Lys21, and Lys24 each carry the N6-lactoyllysine; alternate modification. The residue at position 17 (Lys17) is an N6-glutaryllysine; alternate. Residues Lys21, Lys24, and Lys35 each carry the N6-(2-hydroxyisobutyryl)lysine; alternate modification. Lys21 carries the N6-(beta-hydroxybutyryl)lysine; alternate modification. Position 21 is an N6-butyryllysine; alternate (Lys21). Lys21 is covalently cross-linked (Glycyl lysine isopeptide (Lys-Gly) (interchain with G-Cter in SUMO2); alternate). Lys35 bears the N6-(beta-hydroxybutyryl)lysine; alternate mark. At Lys35 the chain carries N6-glutaryllysine; alternate. Lys35 carries the post-translational modification N6-succinyllysine; alternate. A Glycyl lysine isopeptide (Lys-Gly) (interchain with G-Cter in ubiquitin); alternate cross-link involves residue Lys35. A PolyADP-ribosyl glutamic acid modification is found at Glu36. Ser37 is modified (phosphoserine; by AMPK). Lys44, Lys47, and Lys58 each carry N6-(2-hydroxyisobutyryl)lysine; alternate. Residue Lys44 is modified to N6-lactoyllysine; alternate. An N6-glutaryllysine; alternate mark is found at Lys44 and Lys47. Lys47 bears the N6-methyllysine; alternate mark. Lys58 carries the post-translational modification N6,N6-dimethyllysine; alternate. Arg80 is modified (dimethylated arginine). N6-(2-hydroxyisobutyryl)lysine; alternate is present on Lys86. Lys86 bears the N6-acetyllysine; alternate mark. N6-lactoyllysine; alternate is present on Lys86. The residue at position 86 (Lys86) is an N6,N6,N6-trimethyllysine; alternate. An omega-N-methylarginine mark is found at Arg87 and Arg93. The residue at position 109 (Lys109) is an N6-(2-hydroxyisobutyryl)lysine; alternate. Lys109 carries the N6-lactoyllysine; alternate modification. Position 109 is an N6-glutaryllysine; alternate (Lys109). The residue at position 109 (Lys109) is an N6-methyllysine; alternate. The O-linked (GlcNAc) serine glycan is linked to Ser113. A Phosphothreonine modification is found at Thr116. 2 positions are modified to N6-(2-hydroxyisobutyryl)lysine; alternate: Lys117 and Lys121. At Lys117 the chain carries N6-(beta-hydroxybutyryl)lysine; alternate. An N6-lactoyllysine; alternate mark is found at Lys117 and Lys121. N6-glutaryllysine; alternate is present on residues Lys117 and Lys121. Lys117 and Lys121 each carry N6-succinyllysine; alternate. Residue Lys117 is modified to N6-methylated lysine; alternate. A Glycyl lysine isopeptide (Lys-Gly) (interchain with G-Cter in ubiquitin); alternate cross-link involves residue Lys121.

This sequence belongs to the histone H2B family. As to quaternary structure, the nucleosome is a histone octamer containing two molecules each of H2A, H2B, H3 and H4 assembled in one H3-H4 heterotetramer and two H2A-H2B heterodimers. The octamer wraps approximately 147 bp of DNA. In terms of processing, monoubiquitination at Lys-35 (H2BK34Ub) by the MSL1/MSL2 dimer is required for histone H3 'Lys-4' (H3K4me) and 'Lys-79' (H3K79me) methylation and transcription activation at specific gene loci, such as HOXA9 and MEIS1 loci. Similarly, monoubiquitination at Lys-121 (H2BK120Ub) by the RNF20/40 complex gives a specific tag for epigenetic transcriptional activation and is also prerequisite for histone H3 'Lys-4' and 'Lys-79' methylation. It also functions cooperatively with the FACT dimer to stimulate elongation by RNA polymerase II. H2BK120Ub also acts as a regulator of mRNA splicing: deubiquitination by USP49 is required for efficient cotranscriptional splicing of a large set of exons. Post-translationally, phosphorylated on Ser-15 (H2BS14ph) by STK4/MST1 during apoptosis; which facilitates apoptotic chromatin condensation. Also phosphorylated on Ser-15 in response to DNA double strand breaks (DSBs), and in correlation with somatic hypermutation and immunoglobulin class-switch recombination. Phosphorylation at Ser-37 (H2BS36ph) by AMPK in response to stress promotes transcription. GlcNAcylation at Ser-113 promotes monoubiquitination of Lys-121. It fluctuates in response to extracellular glucose, and associates with transcribed genes. In terms of processing, ADP-ribosylated by PARP1 or PARP2 on Ser-7 (H2BS6ADPr) in response to DNA damage. H2BS6ADPr promotes recruitment of CHD1L. Mono-ADP-ribosylated on Glu-3 (H2BE2ADPr) by PARP3 in response to single-strand breaks. Poly ADP-ribosylation on Glu-36 (H2BE35ADPr) by PARP1 regulates adipogenesis: it inhibits phosphorylation at Ser-37 (H2BS36ph), thereby blocking expression of pro-adipogenetic genes. Post-translationally, crotonylation (Kcr) is specifically present in male germ cells and marks testis-specific genes in post-meiotic cells, including X-linked genes that escape sex chromosome inactivation in haploid cells. Crotonylation marks active promoters and enhancers and confers resistance to transcriptional repressors. It is also associated with post-meiotically activated genes on autosomes. Lactylated in macrophages by EP300/P300 by using lactoyl-CoA directly derived from endogenous or exogenous lactate, leading to stimulates gene transcription.

It localises to the nucleus. It is found in the chromosome. In terms of biological role, core component of nucleosome. Nucleosomes wrap and compact DNA into chromatin, limiting DNA accessibility to the cellular machineries which require DNA as a template. Histones thereby play a central role in transcription regulation, DNA repair, DNA replication and chromosomal stability. DNA accessibility is regulated via a complex set of post-translational modifications of histones, also called histone code, and nucleosome remodeling. This chain is Histone H2B type 1-K, found in Bos taurus (Bovine).